Here is a 254-residue protein sequence, read N- to C-terminus: 3-deoxy-manno-octulosonate cytidylyltransferase (254 aa).

This sequence belongs to the KdsB family.

The protein localises to the cytoplasm. The enzyme catalyses 3-deoxy-alpha-D-manno-oct-2-ulosonate + CTP = CMP-3-deoxy-beta-D-manno-octulosonate + diphosphate. It functions in the pathway nucleotide-sugar biosynthesis; CMP-3-deoxy-D-manno-octulosonate biosynthesis; CMP-3-deoxy-D-manno-octulosonate from 3-deoxy-D-manno-octulosonate and CTP: step 1/1. It participates in bacterial outer membrane biogenesis; lipopolysaccharide biosynthesis. In terms of biological role, activates KDO (a required 8-carbon sugar) for incorporation into bacterial lipopolysaccharide in Gram-negative bacteria. This is 3-deoxy-manno-octulosonate cytidylyltransferase from Nitrobacter winogradskyi (strain ATCC 25391 / DSM 10237 / CIP 104748 / NCIMB 11846 / Nb-255).